The sequence spans 138 residues: ATP synthase epsilon chain 1 (138 aa).

It belongs to the ATPase epsilon chain family. In terms of assembly, F-type ATPases have 2 components, CF(1) - the catalytic core - and CF(0) - the membrane proton channel. CF(1) has five subunits: alpha(3), beta(3), gamma(1), delta(1), epsilon(1). CF(0) has three main subunits: a, b and c.

The protein localises to the cell inner membrane. Produces ATP from ADP in the presence of a proton gradient across the membrane. This Syntrophotalea carbinolica (strain DSM 2380 / NBRC 103641 / GraBd1) (Pelobacter carbinolicus) protein is ATP synthase epsilon chain 1.